Consider the following 534-residue polypeptide: Allene oxide synthase 1, chloroplastic (534 aa).

2 disordered regions span residues 1–31 (MAST…SSYR) and 43–71 (EIPP…LPAQ). A chloroplast-targeting transit peptide spans 1 to 69 (MASTSLSLPS…SPPVKQAKLP (69 aa)). Composition is skewed to low complexity over residues 17-31 (SHTS…SSYR) and 43-62 (EIPP…SSPP). The heme b site is built by lysine 149, histidine 180, and lysine 184. 2 residues coordinate (13S)-hydroperoxy-(9Z,11E)-octadecadienoate: asparagine 337 and lysine 343. A (13S)-hydroperoxy-(9Z,11E,15Z)-octadecatrienoate-binding site is contributed by asparagine 337. Positions 485 and 487 each coordinate heme b.

The protein belongs to the cytochrome P450 family. Requires heme b as cofactor. As to expression, expressed in flowers. Detected in stems and roots, but not in leaves and fruits under non-inducing conditions.

The protein localises to the plastid. Its subcellular location is the chloroplast. The enzyme catalyses (13S)-hydroperoxy-(9Z,11E,15Z)-octadecatrienoate = (9Z,13S,15Z)-12,13-epoxyoctadeca-9,11,15-trienoate + H2O. It catalyses the reaction (13S)-hydroperoxy-(9Z,11E)-octadecadienoate = (9Z,13S)-12,13-epoxyoctadeca-9,11-dienoate + H2O. In terms of biological role, cytochrome P450 of the CYP74A subfamily involved in the biosynthesis of jasmonic acid from lipoxygenase-derived hydroperoxides of free fatty acids. Catalyzes the synthesis of unstable allene oxide, which is further converted spontaneously by hydrolysis or cyclization. Can use 13S-hydroperoxy-9(Z),11(E),15(Z)-octadecatrienoic acid (13-HPOT) and 13S-hydroperoxy-9(Z),11(E)-octadecadienoic acid (13-HPOD) as substrates. The sequence is that of Allene oxide synthase 1, chloroplastic from Solanum lycopersicum (Tomato).